The following is a 226-amino-acid chain: 7-cyano-7-deazaguanine synthase (226 aa).

12–22 (LSGGLDSATVV) is a binding site for ATP. Zn(2+) is bound by residues cysteine 191, cysteine 201, cysteine 204, and cysteine 207.

This sequence belongs to the QueC family. Zn(2+) is required as a cofactor.

The enzyme catalyses 7-carboxy-7-deazaguanine + NH4(+) + ATP = 7-cyano-7-deazaguanine + ADP + phosphate + H2O + H(+). The protein operates within purine metabolism; 7-cyano-7-deazaguanine biosynthesis. Functionally, catalyzes the ATP-dependent conversion of 7-carboxy-7-deazaguanine (CDG) to 7-cyano-7-deazaguanine (preQ(0)). The protein is 7-cyano-7-deazaguanine synthase of Pseudomonas syringae pv. tomato (strain ATCC BAA-871 / DC3000).